We begin with the raw amino-acid sequence, 247 residues long: Adenosylcobinamide-GDP ribazoletransferase (247 aa).

6 consecutive transmembrane segments (helical) span residues 34 to 54 (IVMFPFIGLILGGVSGLIFIL), 59 to 79 (CGIPLAALFCILALALLTGGF), 113 to 133 (GGLALIFVLLAKILVVSELAL), 138 to 158 (MLAALAAACAAGRGSAVLLMY), 171 to 193 (VFIGKVSGRQTCITLGLAIIIAT), and 197 to 219 (PGMQGLAAMVVTCAAIFILGQLL).

It belongs to the CobS family. The cofactor is Mg(2+).

The protein localises to the cell inner membrane. The enzyme catalyses alpha-ribazole + adenosylcob(III)inamide-GDP = adenosylcob(III)alamin + GMP + H(+). The catalysed reaction is alpha-ribazole 5'-phosphate + adenosylcob(III)inamide-GDP = adenosylcob(III)alamin 5'-phosphate + GMP + H(+). It functions in the pathway cofactor biosynthesis; adenosylcobalamin biosynthesis; adenosylcobalamin from cob(II)yrinate a,c-diamide: step 7/7. Functionally, joins adenosylcobinamide-GDP and alpha-ribazole to generate adenosylcobalamin (Ado-cobalamin). Also synthesizes adenosylcobalamin 5'-phosphate from adenosylcobinamide-GDP and alpha-ribazole 5'-phosphate. The sequence is that of Adenosylcobinamide-GDP ribazoletransferase from Salmonella newport (strain SL254).